Here is a 28-residue protein sequence, read N- to C-terminus: Morintide mO6 (28 aa).

The region spanning 1–28 (NGLCCSQYGFCGTTSAYCSRANGCQSNC) is the Chitin-binding type-1 domain. 2 cysteine pairs are disulfide-bonded: Cys4–Cys18 and Cys24–Cys28.

In terms of tissue distribution, seeds (at protein level).

Chitin-binding protein which functions in defense against chitin-containing fungal pathogens. The polypeptide is Morintide mO6 (Moringa oleifera (Horseradish tree)).